The primary structure comprises 479 residues: Glutamate--tRNA ligase (479 aa).

Residues 21 to 31 (PSPTGYLHVGG) carry the 'HIGH' region motif. The 'KMSKS' region motif lies at 248–252 (KLSKR). Lysine 251 contributes to the ATP binding site.

The protein belongs to the class-I aminoacyl-tRNA synthetase family. Glutamate--tRNA ligase type 1 subfamily. As to quaternary structure, monomer.

The protein resides in the cytoplasm. It catalyses the reaction tRNA(Glu) + L-glutamate + ATP = L-glutamyl-tRNA(Glu) + AMP + diphosphate. Functionally, catalyzes the attachment of glutamate to tRNA(Glu) in a two-step reaction: glutamate is first activated by ATP to form Glu-AMP and then transferred to the acceptor end of tRNA(Glu). The protein is Glutamate--tRNA ligase of Actinobacillus pleuropneumoniae serotype 7 (strain AP76).